A 227-amino-acid chain; its full sequence is PKHD-type hydroxylase ACICU_00484 (227 aa).

The Fe2OG dioxygenase domain occupies 78-178 (DIIPPLFNRY…RIASFFWVQS (101 aa)). Residues H96, D98, and H159 each coordinate Fe cation. 2-oxoglutarate is bound at residue R169.

The cofactor is Fe(2+). Requires L-ascorbate as cofactor.

In Acinetobacter baumannii (strain ACICU), this protein is PKHD-type hydroxylase ACICU_00484.